The sequence spans 172 residues: Epididymal secretory protein 4 (172 aa).

The N-terminal stretch at 1–21 is a signal peptide; that stretch reads MIAVLLLVFGMTPDYIFPVSA. Cys-82 and Cys-167 are oxidised to a cystine.

This sequence belongs to the calycin superfamily. Lipocalin family. As to expression, secreted by the epididymal epithelial cells.

It is found in the secreted. Its subcellular location is the extracellular space. Functionally, could transport small hydrophobic molecules into the epididymal fluid during the sperm maturation. Binds to the head region of spermatozoa and plays a key role in sperm maturation. In Zootoca vivipara (Common lizard), this protein is Epididymal secretory protein 4.